The primary structure comprises 187 residues: Frataxin, mitochondrial (187 aa).

This sequence belongs to the frataxin family. As to quaternary structure, monomer. Oligomer. Interacts with NIFS1.

It localises to the mitochondrion. The enzyme catalyses 4 Fe(2+) + O2 + 4 H(+) = 4 Fe(3+) + 2 H2O. Functionally, promotes the biosynthesis of heme as well as the assembly and repair of iron-sulfur clusters by delivering Fe(2+) to proteins involved in these pathways. May play a role in the protection against iron-catalyzed oxidative stress through its ability to catalyze the oxidation of Fe(2+) to Fe(3+). May be able to store large amounts of the metal in the form of a ferrihydrite mineral by oligomerization. Binds to the mitochondrial cysteine desulfurase NIFS1 and increases its activity. The sequence is that of Frataxin, mitochondrial (FH) from Arabidopsis thaliana (Mouse-ear cress).